A 442-amino-acid polypeptide reads, in one-letter code: Ribosomal protein uS12 methylthiotransferase RimO (442 aa).

One can recognise an MTTase N-terminal domain in the interval 8–118; that stretch reads PKVGFVSLGC…VLGHVHKYVE (111 aa). [4Fe-4S] cluster-binding residues include C17, C53, C82, C150, C154, and C157. The 238-residue stretch at 136-373 folds into the Radical SAM core domain; it reads LTPRHYAYLK…MELQQQVSIR (238 aa). Residues 376–442 form the TRAM domain; sequence ARKVGKEMLV…EYDLWASLID (67 aa).

It belongs to the methylthiotransferase family. RimO subfamily. Requires [4Fe-4S] cluster as cofactor.

The protein resides in the cytoplasm. The enzyme catalyses L-aspartate(89)-[ribosomal protein uS12]-hydrogen + (sulfur carrier)-SH + AH2 + 2 S-adenosyl-L-methionine = 3-methylsulfanyl-L-aspartate(89)-[ribosomal protein uS12]-hydrogen + (sulfur carrier)-H + 5'-deoxyadenosine + L-methionine + A + S-adenosyl-L-homocysteine + 2 H(+). Functionally, catalyzes the methylthiolation of an aspartic acid residue of ribosomal protein uS12. The polypeptide is Ribosomal protein uS12 methylthiotransferase RimO (Aeromonas hydrophila subsp. hydrophila (strain ATCC 7966 / DSM 30187 / BCRC 13018 / CCUG 14551 / JCM 1027 / KCTC 2358 / NCIMB 9240 / NCTC 8049)).